The following is an 847-amino-acid chain: Guanine nucleotide exchange factor VAV3 (847 aa).

The Calponin-homology (CH) domain occupies 1–119 (MEPWKQCAQW…ETLSRLSRTP (119 aa)). Tyr-141 is modified (phosphotyrosine). In terms of domain architecture, DH spans 192-371 (IRSCCLAEIK…KDLAQYVNEV (180 aa)). The region spanning 400 to 502 (RPQGDGEIRI…WLEQFEMALS (103 aa)) is the PH domain. The segment at 513 to 562 (FHDFKMHTFTRVTSCKVCQMLLRGTFYQGYLCFKCGARAHKECLGRVDNC) adopts a Phorbol-ester/DAG-type zinc-finger fold. Residues 560–847 (DNCGRVNSGE…FPSTYVEEDE (288 aa)) form a sufficient for interaction with ROS1 region. The region spanning 592–660 (PGLPKMQVIR…PSDAVKPCPC (69 aa)) is the SH3 1 domain. Residues 672-766 (WYAGAMERLQ…TLDTTLQFPY (95 aa)) form the SH2 domain. Residues 788–847 (KVLGIAIARYDFCARDMRELSLLKGDVVKIYTKMSANGWWRGEVNGRVGWFPSTYVEEDE) form the SH3 2 domain.

In terms of assembly, interacts with the PH domain of SH2B2. Interacts (via SH2 domains) with the phosphorylated form of EPHA2. Interacts with ROS1; constitutive interaction that mediates VAV3 phosphorylation. Phosphorylated. Phosphorylation can be mediated by ROS1. In osteoclasts, undergoes tyrosine phosphorylation in response to CSF1. As to expression, isoform 1 and isoform 3 are widely expressed; both are expressed at very low levels in skeletal muscle. In keratinocytes, isoform 1 is less abundant than isoform 3. Isoform 3 is detected at very low levels, if any, in adrenal gland, bone marrow, spleen, fetal brain and spinal cord; in these tissues, isoform 1 is readily detectable.

Its function is as follows. Exchange factor for GTP-binding proteins RhoA, RhoG and, to a lesser extent, Rac1. Binds physically to the nucleotide-free states of those GTPases. Plays an important role in angiogenesis. Its recruitment by phosphorylated EPHA2 is critical for EFNA1-induced RAC1 GTPase activation and vascular endothelial cell migration and assembly. May be important for integrin-mediated signaling, at least in some cell types. In osteoclasts, along with SYK tyrosine kinase, required for signaling through integrin alpha-v/beta-1 (ITAGV-ITGB1), a crucial event for osteoclast proper cytoskeleton organization and function. This signaling pathway involves RAC1, but not RHO, activation. Necessary for proper wound healing. In the course of wound healing, required for the phagocytotic cup formation preceding macrophage phagocytosis of apoptotic neutrophils. Responsible for integrin beta-2 (ITGB2)-mediated macrophage adhesion and, to a lesser extent, contributes to beta-3 (ITGB3)-mediated adhesion. Does not affect integrin beta-1 (ITGB1)-mediated adhesion. The polypeptide is Guanine nucleotide exchange factor VAV3 (VAV3) (Homo sapiens (Human)).